The sequence spans 81 residues: MNPLIAAASVIAAGLAVGLASIGPGVGQGTAAGQAVEGIARQPEAEGKIRGTLLLSLAFMEALTIYGLVVALALLFANPFV.

2 helical membrane-spanning segments follow: residues 3-23 (PLIAAASVIAAGLAVGLASIG) and 57-77 (LAFMEALTIYGLVVALALLFA).

The protein belongs to the ATPase C chain family. F-type ATPases have 2 components, F(1) - the catalytic core - and F(0) - the membrane proton channel. F(1) has five subunits: alpha(3), beta(3), gamma(1), delta(1), epsilon(1). F(0) has four main subunits: a(1), b(1), b'(1) and c(10-14). The alpha and beta chains form an alternating ring which encloses part of the gamma chain. F(1) is attached to F(0) by a central stalk formed by the gamma and epsilon chains, while a peripheral stalk is formed by the delta, b and b' chains.

The protein resides in the plastid. The protein localises to the chloroplast thylakoid membrane. In terms of biological role, f(1)F(0) ATP synthase produces ATP from ADP in the presence of a proton or sodium gradient. F-type ATPases consist of two structural domains, F(1) containing the extramembraneous catalytic core and F(0) containing the membrane proton channel, linked together by a central stalk and a peripheral stalk. During catalysis, ATP synthesis in the catalytic domain of F(1) is coupled via a rotary mechanism of the central stalk subunits to proton translocation. Functionally, key component of the F(0) channel; it plays a direct role in translocation across the membrane. A homomeric c-ring of between 10-14 subunits forms the central stalk rotor element with the F(1) delta and epsilon subunits. This Agrostis stolonifera (Creeping bentgrass) protein is ATP synthase subunit c, chloroplastic.